We begin with the raw amino-acid sequence, 209 residues long: Kynurenine formamidase (209 aa).

Residue Phe-18 participates in substrate binding. Positions 48, 52, and 54 each coordinate Zn(2+). The active-site Proton donor/acceptor is the His-58. Zn(2+) is bound by residues His-160 and Glu-172.

Belongs to the Cyclase 1 superfamily. KynB family. In terms of assembly, homodimer. Requires Zn(2+) as cofactor.

It catalyses the reaction N-formyl-L-kynurenine + H2O = L-kynurenine + formate + H(+). Its pathway is amino-acid degradation; L-tryptophan degradation via kynurenine pathway; L-kynurenine from L-tryptophan: step 2/2. In terms of biological role, catalyzes the hydrolysis of N-formyl-L-kynurenine to L-kynurenine, the second step in the kynurenine pathway of tryptophan degradation. In Bordetella bronchiseptica (strain ATCC BAA-588 / NCTC 13252 / RB50) (Alcaligenes bronchisepticus), this protein is Kynurenine formamidase.